The sequence spans 160 residues: Cyclic pyranopterin monophosphate synthase (160 aa).

Substrate-binding positions include 74-76 and 112-113; these read LSH and ME. D127 is a catalytic residue.

It belongs to the MoaC family. As to quaternary structure, homohexamer; trimer of dimers.

It catalyses the reaction (8S)-3',8-cyclo-7,8-dihydroguanosine 5'-triphosphate = cyclic pyranopterin phosphate + diphosphate. The protein operates within cofactor biosynthesis; molybdopterin biosynthesis. Its function is as follows. Catalyzes the conversion of (8S)-3',8-cyclo-7,8-dihydroguanosine 5'-triphosphate to cyclic pyranopterin monophosphate (cPMP). The polypeptide is Cyclic pyranopterin monophosphate synthase (Geotalea uraniireducens (strain Rf4) (Geobacter uraniireducens)).